The following is a 372-amino-acid chain: Peptidyl-prolyl cis-trans isomerase D (372 aa).

The PPIase cyclophilin-type domain maps to 10-173 (FFDIQIGQQQ…TDVTIAECGE (164 aa)). The tract at residues 174-193 (LTGEDYDNADKQTPDATGDP) is disordered. TPR repeat units follow at residues 215–248 (ASELKNFGNTAFKNGNIALGLEKYQKGLRYLNEF), 268–304 (FTLHSNSSLLANKLGQFKNGKTWATYALDVADAASAK), and 309–342 (AKVYYRRAVAESGLKEEDEALKDLEQASTLAPSD).

The protein belongs to the cyclophilin-type PPIase family. PPIase D subfamily.

It localises to the cytoplasm. The enzyme catalyses [protein]-peptidylproline (omega=180) = [protein]-peptidylproline (omega=0). Its function is as follows. PPIases accelerate the folding of proteins. It catalyzes the cis-trans isomerization of proline imidic peptide bonds in oligopeptides. This chain is Peptidyl-prolyl cis-trans isomerase D (cpr6), found in Emericella nidulans (strain FGSC A4 / ATCC 38163 / CBS 112.46 / NRRL 194 / M139) (Aspergillus nidulans).